A 171-amino-acid polypeptide reads, in one-letter code: MKTLKNMRRKNLCITLGLVSLLSRGANAALERPPIKATETIRLTVTNDCPVTIATNSPPNVGVSSTTPIIFNATVTTTEQCAKSGARVWLWGTGAANKWVLEHTTNTKQKYTLNPSIDGNSYFQTPGTNAAIYKNVTTRDRVLKASVKVDPKIQVLIPGEYRMILHAGINF.

An N-terminal signal peptide occupies residues 1 to 28 (MKTLKNMRRKNLCITLGLVSLLSRGANA).

It is found in the fimbrium. This chain is AAF/I fimbrial subunit (aggA), found in Escherichia coli.